The following is a 450-amino-acid chain: Serine incorporator 2 (450 aa).

The next 11 membrane-spanning stretches (helical) occupy residues 5–27 (LGACSLLSCASCLCGSAPCILCG), 40–57 (LLFTSFLFLGVLVSIIML), 96–118 (AVYRMCFATAAFFFFFMLLMICV), 131–150 (GFWFFKFLILVGITVGAFYI), 160–182 (FYFGVVGSFLFILIQLILFVDFA), 203–225 (AGLFFFTFLFYLLSIAAVALMFV), 238–257 (VFISLNLTFCVCVSIIAVLP), 264–286 (PNSGLLQASVITLYTMFVTWSAL), 315–337 (VWWDAPSIVGLVIFILCTFFISL), 380–402 (TYSYSFFHFCLVLASLHVMMTLT), and 417–439 (WTSVWVKICASWAGLFLYLWTLV).

This sequence belongs to the TDE1 family.

It is found in the cell membrane. The enzyme catalyses a 1,2-diacyl-sn-glycero-3-phospho-L-serine(in) = a 1,2-diacyl-sn-glycero-3-phospho-L-serine(out). The catalysed reaction is a 1,2-diacyl-sn-glycero-3-phosphocholine(in) = a 1,2-diacyl-sn-glycero-3-phosphocholine(out). It catalyses the reaction a 1,2-diacyl-sn-glycero-3-phosphoethanolamine(in) = a 1,2-diacyl-sn-glycero-3-phosphoethanolamine(out). Its function is as follows. Non-ATP-dependent, non-specific lipid transporter for phosphatidylserine, phosphatidylcholine, and phosphatidylethanolamine. Functions as a scramblase that flips lipids in both directions across the membrane. In contrast to SERINC3 and SERINC5, has no effect on gammaretrovirus particles infectivity. In Mus musculus (Mouse), this protein is Serine incorporator 2 (Serinc2).